Reading from the N-terminus, the 361-residue chain is Putative dual-specificity RNA methyltransferase RlmN (361 aa).

Glutamate 91 acts as the Proton acceptor in catalysis. In terms of domain architecture, Radical SAM core spans 97–329 (QHYGLSVCVT…KKKGVNCVVR (233 aa)). Positions 111, 115, and 118 each coordinate [4Fe-4S] cluster. S-adenosyl-L-methionine-binding positions include 163–164 (GE), serine 195, 218–220 (SLH), and threonine 296.

The protein belongs to the radical SAM superfamily. RlmN family. The cofactor is [4Fe-4S] cluster.

The protein resides in the cytoplasm. It carries out the reaction adenosine(2503) in 23S rRNA + 2 reduced [2Fe-2S]-[ferredoxin] + 2 S-adenosyl-L-methionine = 2-methyladenosine(2503) in 23S rRNA + 5'-deoxyadenosine + L-methionine + 2 oxidized [2Fe-2S]-[ferredoxin] + S-adenosyl-L-homocysteine. The catalysed reaction is adenosine(37) in tRNA + 2 reduced [2Fe-2S]-[ferredoxin] + 2 S-adenosyl-L-methionine = 2-methyladenosine(37) in tRNA + 5'-deoxyadenosine + L-methionine + 2 oxidized [2Fe-2S]-[ferredoxin] + S-adenosyl-L-homocysteine. Its function is as follows. Specifically methylates position 2 of adenine 2503 in 23S rRNA and position 2 of adenine 37 in tRNAs. The sequence is that of Putative dual-specificity RNA methyltransferase RlmN from Streptococcus pneumoniae (strain CGSP14).